We begin with the raw amino-acid sequence, 224 residues long: Cell division protein SepF (224 aa).

Positions 21–78 are disordered; that stretch reads DDYYEDDDRGPAPRGYRRPREDRFEDEGYAPRGYDGHPEDRRRDYDEPPAYRAGLAGG. Positions 54-66 are enriched in basic and acidic residues; sequence YDGHPEDRRRDYD.

The protein belongs to the SepF family. As to quaternary structure, homodimer. Interacts with FtsZ.

Its subcellular location is the cytoplasm. In terms of biological role, cell division protein that is part of the divisome complex and is recruited early to the Z-ring. Probably stimulates Z-ring formation, perhaps through the cross-linking of FtsZ protofilaments. Its function overlaps with FtsA. This is Cell division protein SepF from Mycolicibacterium gilvum (strain PYR-GCK) (Mycobacterium gilvum (strain PYR-GCK)).